Here is a 484-residue protein sequence, read N- to C-terminus: Probable glycine dehydrogenase (decarboxylating) subunit 2 (484 aa).

The residue at position 264 (Lys-264) is an N6-(pyridoxal phosphate)lysine.

This sequence belongs to the GcvP family. C-terminal subunit subfamily. The glycine cleavage system is composed of four proteins: P, T, L and H. In this organism, the P 'protein' is a heterodimer of two subunits. Pyridoxal 5'-phosphate is required as a cofactor.

It carries out the reaction N(6)-[(R)-lipoyl]-L-lysyl-[glycine-cleavage complex H protein] + glycine + H(+) = N(6)-[(R)-S(8)-aminomethyldihydrolipoyl]-L-lysyl-[glycine-cleavage complex H protein] + CO2. The glycine cleavage system catalyzes the degradation of glycine. The P protein binds the alpha-amino group of glycine through its pyridoxal phosphate cofactor; CO(2) is released and the remaining methylamine moiety is then transferred to the lipoamide cofactor of the H protein. The polypeptide is Probable glycine dehydrogenase (decarboxylating) subunit 2 (Legionella pneumophila subsp. pneumophila (strain Philadelphia 1 / ATCC 33152 / DSM 7513)).